Consider the following 277-residue polypeptide: Tryptophan synthase alpha chain (277 aa).

Residues glutamate 43 and glutamate 54 each act as proton acceptor in the active site.

It belongs to the TrpA family. As to quaternary structure, tetramer of two alpha and two beta chains.

It carries out the reaction (1S,2R)-1-C-(indol-3-yl)glycerol 3-phosphate + L-serine = D-glyceraldehyde 3-phosphate + L-tryptophan + H2O. It participates in amino-acid biosynthesis; L-tryptophan biosynthesis; L-tryptophan from chorismate: step 5/5. Its function is as follows. The alpha subunit is responsible for the aldol cleavage of indoleglycerol phosphate to indole and glyceraldehyde 3-phosphate. In Haloferax volcanii (strain ATCC 29605 / DSM 3757 / JCM 8879 / NBRC 14742 / NCIMB 2012 / VKM B-1768 / DS2) (Halobacterium volcanii), this protein is Tryptophan synthase alpha chain.